The primary structure comprises 2731 residues: Teneurin-1 (2731 aa).

Residues 1–72 (MEQTDCKPYQ…KRKDVEKSTQ (72 aa)) form a disordered region. The Teneurin N-terminal domain maps to 1–318 (MEQTDCKPYQ…KPYRCCNWKC (318 aa)). The Cytoplasmic portion of the chain corresponds to 1–324 (MEQTDCKPYQ…NWKCTALSAT (324 aa)). Residues 44-55 (ETLHEYNQELRR) show a composition bias toward basic and acidic residues. Positions 62-65 (RKRK) match the Nuclear localization signal (NLS) motif. Position 105 is a phosphoserine (Ser105). The residue at position 109 (Thr109) is a Phosphothreonine. A Phosphoserine modification is found at Ser116. The tract at residues 175–241 (DSAQDMQSSP…PAPPTSTQDS (67 aa)) is disordered. Over residues 178 to 189 (QDMQSSPHNQFT) the composition is skewed to polar residues. Positions 192 to 201 (PLPPPPPPPH) are enriched in pro residues. The span at 214–224 (DSLQRRSMTTR) shows a compositional bias: polar residues. The short motif at 290 to 297 (PPPRPLPR) is the Required for interaction with SORBS1 (Ten-1 ICD form) element. The helical transmembrane segment at 325–345 (AITVTLALLLAYVIAVHLFGL) threads the bilayer. Residues 346–2731 (TWQLQPVGQI…FMRQSEIGRR (2386 aa)) lie on the Extracellular side of the membrane. Residue Asn432 is glycosylated (N-linked (GlcNAc...) asparagine). 8 EGF-like domains span residues 527-558 (IMDD…PDCA), 559-590 (RDSC…ECDV), 591-623 (PEEQ…EICE), 624-656 (EEDC…NCET), 657-690 (PLPI…SDCS), 691-720 (TELC…GPTC), 721-752 (EERS…DHCT), and 760-795 (VRDG…TGCN). 22 disulfide bridges follow: Cys531-Cys541, Cys535-Cys546, Cys548-Cys557, Cys566-Cys577, Cys579-Cys588, Cys595-Cys606, Cys600-Cys611, Cys613-Cys622, Cys627-Cys638, Cys632-Cys643, Cys645-Cys654, Cys665-Cys678, Cys680-Cys689, Cys694-Cys704, Cys698-Cys709, Cys711-Cys720, Cys725-Cys735, Cys729-Cys740, Cys742-Cys751, Cys764-Cys774, Cys768-Cys783, and Cys785-Cys794. Asn904 and Asn1083 each carry an N-linked (GlcNAc...) asparagine glycan. NHL repeat units lie at residues 1193–1218 (LFAP…VRRI), 1298–1342 (SHCG…NAVI), 1357–1408 (LSCD…IAGR), 1420–1464 (FLVS…VTTN), and 1487–1530 (CFSG…ISKN). The YD 1 repeat unit spans residues 1540–1559 (YEIASPADQELYQFTVNGTH). N-linked (GlcNAc...) asparagine glycans are attached at residues Asn1556 and Asn1573. 4 YD repeats span residues 1576–1596 (YNAE…VHIR), 1614–1638 (YWLT…ALMT), 1639–1660 (YPGN…TVYE), and 1661–1681 (YDPE…SSFH). Asn1669, Asn1705, Asn1743, Asn1763, Asn1787, and Asn1848 each carry an N-linked (GlcNAc...) asparagine glycan. YD repeat units lie at residues 1851-1870 (YSPS…EKME), 1871-1891 (YDQS…WSYT), 1892-1910 (YLEK…YIFE), 1911-1931 (YDQS…HSLQ), 1939-1955 (YRNI…FIQD), 1956-1975 (YSRD…RRVL), 1976-1995 (YKYT…TQVT), 1998-2018 (YEES…FICT), 2021-2041 (YRQT…EGLV), 2091-2111 (YDLN…FNAN), and 2119-2139 (YEIL…MGRM). N-linked (GlcNAc...) asparagine glycosylation occurs at Asn2151. YD repeat units follow at residues 2159-2179 (YDAD…WRYS), 2180-2200 (YDLN…LTPL), 2202-2222 (YDLR…DEDG), 2234-2254 (YNSN…TVQY), and 2256-2276 (YDGL…LQFF). Asn2291 carries an N-linked (GlcNAc...) asparagine glycan. 2 YD repeats span residues 2302–2319 (YDLQ…GEEY) and 2320–2343 (YVAC…IKEI). Ser2586 is modified (phosphoserine). N-linked (GlcNAc...) asparagine glycosylation occurs at Asn2608.

It belongs to the tenascin family. Teneurin subfamily. As to quaternary structure, homodimer; disulfide-linked. Heterodimer with either TENM2 or TENM3. May also form heterodimer with TENM4. Ten-1 ICD interacts with SORBS1 (via third SH3 domain). Interacts with MBD1 isoform 2. Ten-1 ICD interacts with HINT1. Post-translationally, once secreted, may also be cleaved to give rise to the TCAP-1 form. In terms of processing, derives from the plasma membrane form by proteolytic processing. Further proteolytic cleavage may generate 11.9 and 4.7 kDa bioactive peptides. In terms of tissue distribution, isoform 1 and isoform 2 are expressed in the brain. Isoform 2 is expressed in the granular layer of the dentate gyrus and the pyramidal layer (Py) of the CA1, CA2 and CA3 of the hippocampus (at protein level). Expressed in the cortex, thalamus, CA1, CA2, CA3, dentate gyrus and granular layer of the hippocampus. Weakly expressed in kidney, testis and lung.

It is found in the cell membrane. The protein resides in the cytoplasm. Its subcellular location is the secreted. The protein localises to the nucleus. It localises to the nucleus speckle. It is found in the nucleus matrix. The protein resides in the cytoskeleton. Its function is as follows. Involved in neural development, regulating the establishment of proper connectivity within the nervous system. May function as a cellular signal transducer. Functionally, plays a role in the regulation of neuroplasticity in the limbic system. Mediates a rapid reorganization of actin- and tubulin-based cytoskeleton elements with an increase in dendritic arborization and spine density formation of neurons in the hippocampus and amygdala. Induces BDNF transcription inhibition in neurons. Activates the mitogen-activated protein (MAP) kinase 2 (MEK2) and extracellular signal-regulated kinase (ERK) cascade. Also acts as a bioactive neuroprotective peptide on limbic neurons of the brain and regulates stress-induced behavior: attenuates alkalosis-associated necrotic cell death and the effects of corticotropin-releasing factor (CRF) on c-fos/FOS induction and on the reinstatement of cocaine seeking. In terms of biological role, induces gene transcription activation. The protein is Teneurin-1 (Tenm1) of Mus musculus (Mouse).